The sequence spans 211 residues: MGISRDALHKHRLTGAARKCNYKKRKYELGRQAAKTKICSQGEEKRVRSIRVRGGHQKFRALRLDTGNFSWATEKITRKCRILNVVYNATSNDLVRTNTLVKGSIVQIDATPYKQWYETHYGVVVGKKKSAKKDGEAEQVVKKSASLLAKLASRAKGRVLDSAIESQIGEGRFFARITSRPGQVGKCDGYILEAKELEFYQRRLQKKKSAK.

Belongs to the eukaryotic ribosomal protein eS8 family.

This chain is Small ribosomal subunit protein eS8 (rps8), found in Dictyostelium discoideum (Social amoeba).